Here is a 137-residue protein sequence, read N- to C-terminus: Nucleoside diphosphate kinase (137 aa).

ATP-binding residues include Lys9, Phe57, Arg85, Thr91, Arg102, and Asn112. His115 serves as the catalytic Pros-phosphohistidine intermediate.

Belongs to the NDK family. Homotetramer. Mg(2+) serves as cofactor.

The protein resides in the cytoplasm. The catalysed reaction is a 2'-deoxyribonucleoside 5'-diphosphate + ATP = a 2'-deoxyribonucleoside 5'-triphosphate + ADP. It carries out the reaction a ribonucleoside 5'-diphosphate + ATP = a ribonucleoside 5'-triphosphate + ADP. Its function is as follows. Major role in the synthesis of nucleoside triphosphates other than ATP. The ATP gamma phosphate is transferred to the NDP beta phosphate via a ping-pong mechanism, using a phosphorylated active-site intermediate. The polypeptide is Nucleoside diphosphate kinase (Aliarcobacter butzleri (strain RM4018) (Arcobacter butzleri)).